The following is a 234-amino-acid chain: tRNA (guanine-N(1)-)-methyltransferase (234 aa).

Residue G113 coordinates S-adenosyl-L-methionine.

This sequence belongs to the RNA methyltransferase TrmD family. As to quaternary structure, homodimer.

It is found in the cytoplasm. It carries out the reaction guanosine(37) in tRNA + S-adenosyl-L-methionine = N(1)-methylguanosine(37) in tRNA + S-adenosyl-L-homocysteine + H(+). Its function is as follows. Specifically methylates guanosine-37 in various tRNAs. The chain is tRNA (guanine-N(1)-)-methyltransferase from Gluconobacter oxydans (strain 621H) (Gluconobacter suboxydans).